We begin with the raw amino-acid sequence, 427 residues long: tRNA(Ile)-lysidine synthase (427 aa).

25-30 (SGGLDS) contacts ATP.

The protein belongs to the tRNA(Ile)-lysidine synthase family.

The protein localises to the cytoplasm. The catalysed reaction is cytidine(34) in tRNA(Ile2) + L-lysine + ATP = lysidine(34) in tRNA(Ile2) + AMP + diphosphate + H(+). Ligates lysine onto the cytidine present at position 34 of the AUA codon-specific tRNA(Ile) that contains the anticodon CAU, in an ATP-dependent manner. Cytidine is converted to lysidine, thus changing the amino acid specificity of the tRNA from methionine to isoleucine. This is tRNA(Ile)-lysidine synthase from Histophilus somni (strain 129Pt) (Haemophilus somnus).